A 1190-amino-acid polypeptide reads, in one-letter code: MEEVCEGKEFSFPRQEEDVLSFWTEIDAFKTQLKRTENLPEYIFYDGPPFATGLPHYGHILAGTIKDIVTRYQTMTGHHVTRRFGWDCHGLPVENEIDRKLNIKRRDEVIKMGIDKYNEECRSIVTRYVAEWEKVITRCGRWIDFKNDYKTMDLPFMESVWWVFSQLWEKNLVYRGFKVMPYSTGCKTPLSNFEAGQNYKEVPDPEIMVTFPVIGDQDNAAFVAWTTTPWTLPSNLALCVNAKFVYVKVRNKNTGKVYIVAESRLSALPTDKPKAKLSNGPAGDTKKANPKAKGAKPESAADSYEVLEKFNGASLVGKKYEPLFDYFSDFSSEAFRVVADDYVTDDSGTGIVHCAPAFGEDDYRVCLLNKIIKKGENLVVAVDDDGLFTERITHFSGRYVKDADKDIIEAVKAKGRLVKTGSFTHSYPFCWRSDTPLIYRAVPSWFVRVEQLKEKLLKSNEQTEWVPGYVKDKRFHNWLENARDWAISRSRFWGTPLPIWISDDGEEVVIMDSVEKLEKLSGVKVFDLHRHHIDHITIPSSRGDEFGVLRRVEDVFDCWFESGSMPYAYIHYPFENKELFEKNFPGDFVAEGLDQTRGWFYTLMVLSTALFEKPAFKNLICNGLVLAEDGKKMAKKLRNYPPPLEVIDEYGADAVRLYLINSPVVRAEPLRFKKEGVLGVVKDVFLPWYNAYRFLVQNAKRLETEGGVPFVPTDLATIQSANILDQWIHSATQSLVRFVREEMDAYRLYTVVPRLLKFLDNLTNIYVRFNRKRLKGRTGEDDCHTALSTLFNVLLTSCKVMAPFTPFFTETLYQNLRKACKGSEESVHYCSIPPREGMEGERIELSVTRMMKIIDLARNIRERNKLPLKTPLKEMIVVHPDADFLNDITGVLREYVLEELNVRSLVPCNDTLKYASLKAEPDFSVLGKRLGKSMGLVAKEVKEMSQKDILAFEEAGEVTIANHLLKETDIKIVRVFKRPDDLKENEIDSAGDGDVLVILDLRADDSLVEAGFAREIVNRIQKLRKKSGLEPTDFVEVYFQSLDEDESVSKQVLVSQEQNIKDSIGSTLLLSSLMPSHAVIIADETFTPKETSDESVKKVPKLSYKISLARPALKFNEEAVLALYSGDVKSATGLQTYLLSRDHSNLKSEFQAGDGKITVSCIENVPVATVVLGEHLHLSVGDDLLSKRNA.

Positions 49-59 match the 'HIGH' region motif; it reads PFATGLPHYGH. The segment at 271–299 is disordered; it reads DKPKAKLSNGPAGDTKKANPKAKGAKPES. Residues 632-636 carry the 'KMSKS' region motif; sequence KMAKK. Lys-635 contributes to the ATP binding site.

The protein belongs to the class-I aminoacyl-tRNA synthetase family.

It is found in the cytoplasm. It localises to the cytosol. It catalyses the reaction tRNA(Ile) + L-isoleucine + ATP = L-isoleucyl-tRNA(Ile) + AMP + diphosphate. In Arabidopsis thaliana (Mouse-ear cress), this protein is Isoleucine--tRNA ligase, cytoplasmic.